A 441-amino-acid polypeptide reads, in one-letter code: Proline--tRNA ligase (441 aa).

It belongs to the class-II aminoacyl-tRNA synthetase family. ProS type 2 subfamily. In terms of assembly, homodimer.

It localises to the cytoplasm. The catalysed reaction is tRNA(Pro) + L-proline + ATP = L-prolyl-tRNA(Pro) + AMP + diphosphate. Catalyzes the attachment of proline to tRNA(Pro) in a two-step reaction: proline is first activated by ATP to form Pro-AMP and then transferred to the acceptor end of tRNA(Pro). The polypeptide is Proline--tRNA ligase (Afipia carboxidovorans (strain ATCC 49405 / DSM 1227 / KCTC 32145 / OM5) (Oligotropha carboxidovorans)).